The chain runs to 150 residues: D-aminoacyl-tRNA deacylase (150 aa).

The Gly-cisPro motif, important for rejection of L-amino acids signature appears at 138–139; sequence GP.

This sequence belongs to the DTD family. In terms of assembly, homodimer.

It is found in the cytoplasm. The enzyme catalyses glycyl-tRNA(Ala) + H2O = tRNA(Ala) + glycine + H(+). The catalysed reaction is a D-aminoacyl-tRNA + H2O = a tRNA + a D-alpha-amino acid + H(+). Its function is as follows. An aminoacyl-tRNA editing enzyme that deacylates mischarged D-aminoacyl-tRNAs. Also deacylates mischarged glycyl-tRNA(Ala), protecting cells against glycine mischarging by AlaRS. Acts via tRNA-based rather than protein-based catalysis; rejects L-amino acids rather than detecting D-amino acids in the active site. By recycling D-aminoacyl-tRNA to D-amino acids and free tRNA molecules, this enzyme counteracts the toxicity associated with the formation of D-aminoacyl-tRNA entities in vivo and helps enforce protein L-homochirality. In Flavobacterium psychrophilum (strain ATCC 49511 / DSM 21280 / CIP 103535 / JIP02/86), this protein is D-aminoacyl-tRNA deacylase.